The following is a 148-amino-acid chain: Large ribosomal subunit protein uL11 (148 aa).

The disordered stretch occupies residues 89–108 (EKKKGSGAHKPGKEKVGQVT).

The protein belongs to the universal ribosomal protein uL11 family. As to quaternary structure, part of the ribosomal stalk of the 50S ribosomal subunit. Interacts with L10 and the large rRNA to form the base of the stalk. L10 forms an elongated spine to which L12 dimers bind in a sequential fashion forming a multimeric L10(L12)X complex. Post-translationally, one or more lysine residues are methylated.

Its function is as follows. Forms part of the ribosomal stalk which helps the ribosome interact with GTP-bound translation factors. In Anaeromyxobacter sp. (strain Fw109-5), this protein is Large ribosomal subunit protein uL11.